We begin with the raw amino-acid sequence, 444 residues long: Serine carboxypeptidase 2 (444 aa).

60–62 (NGG) is a substrate binding site. 3 disulfide bridges follow: Cys65/Cys324, Cys222/Cys234, and Cys258/Cys291. N-linked (GlcNAc...) asparagine glycans are attached at residues Asn116 and Asn127. Residue 157–159 (ESY) coordinates substrate. Ser158 is a catalytic residue. Asn259 carries N-linked (GlcNAc...) asparagine glycosylation. A propeptide spans 260–286 (ITSSSSSSSSSLSQQRRSRGRYPWLTG) (linker peptide). 2 N-linked (GlcNAc...) asparagine glycosylation sites follow: Asn312 and Asn318. Residues Asp361 and His413 contribute to the active site. 409-413 (RGAGH) contacts substrate.

The protein belongs to the peptidase S10 family. As to quaternary structure, carboxypeptidase II is a dimer, where each monomer is composed of two chains linked by a disulfide bond. In terms of processing, N-glycosylated.

The enzyme catalyses Preferential release of a C-terminal arginine or lysine residue.. The protein is Serine carboxypeptidase 2 (CBP2) of Triticum aestivum (Wheat).